Reading from the N-terminus, the 239-residue chain is Guanylate kinase (239 aa).

Residues 19 to 197 (GLLIVVTGAS…AVSELLAVQQ (179 aa)) form the Guanylate kinase-like domain. 26–33 (GASGVGKG) provides a ligand contact to ATP.

It belongs to the guanylate kinase family.

It is found in the cytoplasm. It catalyses the reaction GMP + ATP = GDP + ADP. Functionally, essential for recycling GMP and indirectly, cGMP. The protein is Guanylate kinase (gmk) of Deinococcus radiodurans (strain ATCC 13939 / DSM 20539 / JCM 16871 / CCUG 27074 / LMG 4051 / NBRC 15346 / NCIMB 9279 / VKM B-1422 / R1).